A 122-amino-acid polypeptide reads, in one-letter code: Large ribosomal subunit protein uL14 (122 aa).

This sequence belongs to the universal ribosomal protein uL14 family. As to quaternary structure, part of the 50S ribosomal subunit. Forms a cluster with proteins L3 and L19. In the 70S ribosome, L14 and L19 interact and together make contacts with the 16S rRNA in bridges B5 and B8.

Binds to 23S rRNA. Forms part of two intersubunit bridges in the 70S ribosome. The polypeptide is Large ribosomal subunit protein uL14 (Leuconostoc mesenteroides subsp. mesenteroides (strain ATCC 8293 / DSM 20343 / BCRC 11652 / CCM 1803 / JCM 6124 / NCDO 523 / NBRC 100496 / NCIMB 8023 / NCTC 12954 / NRRL B-1118 / 37Y)).